Reading from the N-terminus, the 498-residue chain is Membrane-bound lytic murein transglycosylase F (498 aa).

The N-terminal stretch at 1–29 (MFFKPDFRPRCAKWLIATGLFLMLGACVE) is a signal peptide. The non-LT domain stretch occupies residues 30–267 (KPTTLERVKE…RLKDRYYGHV (238 aa)). Residues 268-498 (DVLGYVGAYT…SSSSTDESPL (231 aa)) are LT domain. Residue Glu-314 is part of the active site. The tract at residues 464–498 (VADGNLHVPGVDKTQPPVPPASPVPSSSSTDESPL) is disordered.

It in the N-terminal section; belongs to the bacterial solute-binding protein 3 family. The protein in the C-terminal section; belongs to the transglycosylase Slt family.

It is found in the cell outer membrane. It carries out the reaction Exolytic cleavage of the (1-&gt;4)-beta-glycosidic linkage between N-acetylmuramic acid (MurNAc) and N-acetylglucosamine (GlcNAc) residues in peptidoglycan, from either the reducing or the non-reducing ends of the peptidoglycan chains, with concomitant formation of a 1,6-anhydrobond in the MurNAc residue.. Its function is as follows. Murein-degrading enzyme that degrades murein glycan strands and insoluble, high-molecular weight murein sacculi, with the concomitant formation of a 1,6-anhydromuramoyl product. Lytic transglycosylases (LTs) play an integral role in the metabolism of the peptidoglycan (PG) sacculus. Their lytic action creates space within the PG sacculus to allow for its expansion as well as for the insertion of various structures such as secretion systems and flagella. This chain is Membrane-bound lytic murein transglycosylase F, found in Pseudomonas syringae pv. syringae (strain B728a).